The chain runs to 504 residues: Maturase K (504 aa).

The protein belongs to the intron maturase 2 family. MatK subfamily.

The protein resides in the plastid. It is found in the chloroplast. In terms of biological role, usually encoded in the trnK tRNA gene intron. Probably assists in splicing its own and other chloroplast group II introns. The sequence is that of Maturase K from Draba nemorosa (Woodland whitlowgrass).